The following is a 199-amino-acid chain: Golgi to ER traffic protein 1 (199 aa).

At 1-11 the chain is on the lumenal side; it reads MLLPDLHPYTI. The helical transmembrane segment at 12–31 threads the bilayer; it reads LLSIFLVLVVKQLVATIGKS. Residues 32-115 lie on the Cytoplasmic side of the membrane; it reads TIQEFVWLVY…SIDKASNALI (84 aa). Residues 76-116 adopt a coiled-coil conformation; sequence YAKWTKLNRQADKLSAELQKLNQEIQQQKSSIDKASNALIL. The helical transmembrane segment at 116 to 136 threads the bilayer; the sequence is LVLTTLPIWIARVFYRKTHLF. At 137-160 the chain is on the lumenal side; that stretch reads YIRQGIFPKYVEWVLALPFLPNGA. The helical transmembrane segment at 161–177 threads the bilayer; sequence VGLTIWMFAVNSVVSNF. The Cytoplasmic portion of the chain corresponds to 178–199; sequence SFLVSFPFAKRVSKPVRDTKVE.

It belongs to the WRB/GET1 family. In terms of assembly, component of the Golgi to ER traffic (GET) complex, which is composed of GET1, GET2 and GET3. Within the complex, GET1 and GET2 form a heterotetramer which is stabilized by phosphatidylinositol binding and which binds to the GET3 homodimer.

The protein localises to the endoplasmic reticulum membrane. The protein resides in the golgi apparatus membrane. Functionally, required for the post-translational delivery of tail-anchored (TA) proteins to the endoplasmic reticulum. Together with GET2, acts as a membrane receptor for soluble GET3, which recognizes and selectively binds the transmembrane domain of TA proteins in the cytosol. The GET complex cooperates with the HDEL receptor ERD2 to mediate the ATP-dependent retrieval of resident ER proteins that contain a C-terminal H-D-E-L retention signal from the Golgi to the ER. In Candida albicans (strain WO-1) (Yeast), this protein is Golgi to ER traffic protein 1.